A 555-amino-acid chain; its full sequence is MRGVKLLAACLYLAAAATVVVHAEDPYFHHVWNVTYGTASPLGVPQQVILINGQFPGPNINSTSNNNVIINVFNNLDEPFLLTWNGIQHRKNCWQDGTPGTMCPIMPGTNYTYHFQPKDQIGSYFYYPTTGMHRAAGGYGGLRVNSRLLIPVPYADPEDDYTVLIGDWYTKSHTQLKKFLDGGRTIGRPDGIVINGKSGKGDGSDAPLFTLKPGKTYRVRICNVGVKTSINFRIQNHKMKLVEMEGSHVLQNDYDSLDVHVGQCFGTIVTANQEPKDYYMVASSRFLKTVITTTGLLRYEGGKGPASSQLPAGPVGWAWSLNQFRSFRWNLTASAARPNPQGSYHYGKINITRTIKLVNTQGKVDGKLRFALNGVSHTEPETPLKLAEYFGISDKVFKYDTITDDPTPEQIKNIKIEPNVLNITHRTFVEVVFENHEKSVQSWHLDGYSFFSVAVEPGTWTPEKRKNYNLLDAVSRHTVQVYPKCWAAILLTFDNCGMWNVRSENTERRYLGQQLYASVLSPEKSLRDEYNMPETSLQCGLVKNTPKPVNPYAGA.

An N-terminal signal peptide occupies residues 1–23 (MRGVKLLAACLYLAAAATVVVHA). Plastocyanin-like domains follow at residues 25–145 (DPYF…LRVN) and 158–301 (EDDY…RYEG). Asn33, Asn61, and Asn110 each carry an N-linked (GlcNAc...) asparagine glycan. A disulfide bond links Cys103 and Cys539. N-linked (GlcNAc...) asparagine glycans are attached at residues Asn330, Asn350, and Asn422. The 180-residue stretch at 345-524 (HYGKINITRT…LYASVLSPEK (180 aa)) folds into the Plastocyanin-like 3 domain.

The protein belongs to the multicopper oxidase family. In terms of tissue distribution, maximal expression in early binucleate microspores; declines considerably in mature trinucleate pollen.

It is found in the secreted. In terms of biological role, probable oxidase that may be involved in pollen tube growth. This chain is L-ascorbate oxidase homolog (Bp10), found in Brassica napus (Rape).